We begin with the raw amino-acid sequence, 941 residues long: Pre-mRNA-processing factor 6 (941 aa).

The tract at residues 1 to 79 (MNKKKKPFLG…DEDLNDTNYD (79 aa)) is disordered. Residues 39–65 (DANDPVDDRHAPPGKRTVGDQMKKNQA) show a composition bias toward basic and acidic residues. Positions 66-78 (ADDDDEDLNDTNY) are enriched in acidic residues. The residue at position 143 (Ser-143) is a Phosphoserine. Residues Thr-180, Thr-266, and Thr-275 each carry the phosphothreonine modification. A Phosphoserine modification is found at Ser-279. 9 HAT repeats span residues 384 to 416 (TDIRAKKRVLRKALEHVPNSVRLWKAAVELEEP), 418 to 444 (DARIMLSRAVECCPTSVELWLALARLE), 445 to 476 (TYENARKVLNKARENIPTDRHIWITAAKLEEA), 554 to 586 (NALECARAIYAYALQVFPSKKSVWLRAAYFGKN), 588 to 620 (GTRESLEALLQRAVAHCPKAEVLWLMGAKSKWL), 622 to 654 (GDVPAARSILALAFQANPNSEEIWLAAVKLESE), 689 to 721 (DNIRAAQDLCEEALRHYEDFPKLWMMKGQIEEQ), 723 to 755 (EMMEKAREAYNQGLKKCPHSTPLWLLLSRLEEK), and 855 to 887 (RKITKAREWFHRTVKIDSDLGDAWAFFYKFELQ).

In terms of assembly, identified in the spliceosome B complex. Identified in the spliceosome C complex. Associates with the U5 snRNP particle. Component of the U4/U6-U5 tri-snRNP complex composed of the U4, U6 and U5 snRNAs and at least PRPF3, PRPF4, PRPF6, PRPF8, PRPF31, SNRNP200, TXNL4A, SNRNP40, DDX23, CD2BP2, PPIH, SNU13, EFTUD2, SART1 and USP39, LSm proteins LSm2-8 and Sm proteins. Interacts with ARAF1. Interacts with AR and NR3C1, but not ESR1, independently of the presence of hormones. Interacts with USH1G. In terms of processing, phosphorylated by PRP4K during spliceosome assembly.

Its subcellular location is the nucleus. It localises to the nucleoplasm. The protein localises to the nucleus speckle. Its function is as follows. Involved in pre-mRNA splicing as component of the U4/U6-U5 tri-snRNP complex, one of the building blocks of the spliceosome. Enhances dihydrotestosterone-induced transactivation activity of AR, as well as dexamethasone-induced transactivation activity of NR3C1, but does not affect estrogen-induced transactivation. In Pongo abelii (Sumatran orangutan), this protein is Pre-mRNA-processing factor 6 (PRPF6).